Consider the following 109-residue polypeptide: Large ribosomal subunit protein uL24 (109 aa).

It belongs to the universal ribosomal protein uL24 family. As to quaternary structure, part of the 50S ribosomal subunit.

Functionally, one of two assembly initiator proteins, it binds directly to the 5'-end of the 23S rRNA, where it nucleates assembly of the 50S subunit. In terms of biological role, one of the proteins that surrounds the polypeptide exit tunnel on the outside of the subunit. In Syntrophotalea carbinolica (strain DSM 2380 / NBRC 103641 / GraBd1) (Pelobacter carbinolicus), this protein is Large ribosomal subunit protein uL24.